The following is a 216-amino-acid chain: Redox-sensing transcriptional repressor Rex (216 aa).

The H-T-H motif DNA-binding region spans 20 to 59 (QYYRLFKSLVEENVTRTNSQLISEKIGVDAATIRRDFSLF). 94-99 (GVGNLG) contributes to the NAD(+) binding site.

It belongs to the transcriptional regulatory Rex family. As to quaternary structure, homodimer.

Its subcellular location is the cytoplasm. Its function is as follows. Modulates transcription in response to changes in cellular NADH/NAD(+) redox state. The sequence is that of Redox-sensing transcriptional repressor Rex from Lactococcus lactis subsp. lactis (strain IL1403) (Streptococcus lactis).